We begin with the raw amino-acid sequence, 689 residues long: Protein CFAP20DC (689 aa).

Disordered regions lie at residues 241 to 263 (LKSTSRERTETPSGSSSGNNRIE), 333 to 423 (SKES…GPSE), and 584 to 659 (ISTS…DLSV). 2 stretches are compositionally biased toward polar residues: residues 251–260 (TPSGSSSGNN) and 343–359 (EESQSVPKDIFTFSSRP). Positions 394–405 (SEDDFYGGDSSE) are enriched in acidic residues. A compositionally biased stretch (polar residues) spans 409 to 421 (HSIQGSRGPTTGP). Low complexity predominate over residues 584–593 (ISTSSDDTTT).

The polypeptide is Protein CFAP20DC (Homo sapiens (Human)).